The following is a 378-amino-acid chain: Deoxyhypusine synthase (378 aa).

NAD(+) contacts are provided by residues 107-111, 133-135, glutamate 139, and aspartate 253; these read SNLIS and SAG. 138–139 is a spermidine binding site; it reads EE. Spermidine is bound at residue aspartate 258. Glycine 300 serves as a coordination point for NAD(+). Spermidine is bound at residue histidine 305. Position 325–326 (325–326) interacts with NAD(+); sequence TG. Residues 331–333 and 340–346 contribute to the spermidine site; these read GSD and EAISWGK. Residue lysine 346 is the Nucleophile of the active site. 359–360 is an NAD(+) binding site; that stretch reads DA.

This sequence belongs to the deoxyhypusine synthase family. NAD(+) serves as cofactor.

It carries out the reaction [eIF5A protein]-L-lysine + spermidine = [eIF5A protein]-deoxyhypusine + propane-1,3-diamine. The protein operates within protein modification; eIF5A hypusination. Functionally, catalyzes the NAD-dependent oxidative cleavage of spermidine and the subsequent transfer of the butylamine moiety of spermidine to the epsilon-amino group of a specific lysine residue of the eIF-5A precursor protein to form the intermediate deoxyhypusine residue. This is Deoxyhypusine synthase (DYS1) from Debaryomyces hansenii (strain ATCC 36239 / CBS 767 / BCRC 21394 / JCM 1990 / NBRC 0083 / IGC 2968) (Yeast).